Here is a 150-residue protein sequence, read N- to C-terminus: D-aminoacyl-tRNA deacylase (150 aa).

Positions 133–134 match the Gly-cisPro motif, important for rejection of L-amino acids motif; sequence GP.

The protein belongs to the DTD family. In terms of assembly, homodimer.

It localises to the cytoplasm. The catalysed reaction is glycyl-tRNA(Ala) + H2O = tRNA(Ala) + glycine + H(+). It catalyses the reaction a D-aminoacyl-tRNA + H2O = a tRNA + a D-alpha-amino acid + H(+). Functionally, an aminoacyl-tRNA editing enzyme that deacylates mischarged D-aminoacyl-tRNAs. Also deacylates mischarged glycyl-tRNA(Ala), protecting cells against glycine mischarging by AlaRS. Acts via tRNA-based rather than protein-based catalysis; rejects L-amino acids rather than detecting D-amino acids in the active site. By recycling D-aminoacyl-tRNA to D-amino acids and free tRNA molecules, this enzyme counteracts the toxicity associated with the formation of D-aminoacyl-tRNA entities in vivo and helps enforce protein L-homochirality. The sequence is that of D-aminoacyl-tRNA deacylase from Micrococcus luteus (strain ATCC 4698 / DSM 20030 / JCM 1464 / CCM 169 / CCUG 5858 / IAM 1056 / NBRC 3333 / NCIMB 9278 / NCTC 2665 / VKM Ac-2230) (Micrococcus lysodeikticus).